Consider the following 508-residue polypeptide: Protoporphyrinogen oxidase 2, chloroplastic/mitochondrial (508 aa).

A chloroplast and mitochondrion-targeting transit peptide spans 1–22; sequence MASGAVADHQIEAVSGKRVAVV. Residues 23 to 28, 46 to 47, and 68 to 71 contribute to the FAD site; these read GAGVSG, EA, and GANT. The disordered stretch occupies residues 219–239; that stretch reads KGGKSRDTKSSPGTKKGSRGS. Residues valine 268 and 475 to 477 contribute to the FAD site; that span reads LSV.

This sequence belongs to the protoporphyrinogen/coproporphyrinogen oxidase family. Protoporphyrinogen oxidase subfamily. FAD serves as cofactor.

It localises to the plastid. The protein resides in the chloroplast. It is found in the mitochondrion. It carries out the reaction protoporphyrinogen IX + 3 O2 = protoporphyrin IX + 3 H2O2. It participates in porphyrin-containing compound metabolism; protoporphyrin-IX biosynthesis; protoporphyrin-IX from protoporphyrinogen-IX: step 1/1. Its pathway is porphyrin-containing compound metabolism; chlorophyll biosynthesis. Its function is as follows. Catalyzes the 6-electron oxidation of protoporphyrinogen-IX to form protoporphyrin-IX. The protein is Protoporphyrinogen oxidase 2, chloroplastic/mitochondrial (PPOX2) of Arabidopsis thaliana (Mouse-ear cress).